A 180-amino-acid polypeptide reads, in one-letter code: Large ribosomal subunit protein uL5 (180 aa).

The protein belongs to the universal ribosomal protein uL5 family. Part of the 50S ribosomal subunit; part of the 5S rRNA/L5/L18/L25 subcomplex. Contacts the 5S rRNA and the P site tRNA. Forms a bridge to the 30S subunit in the 70S ribosome.

This is one of the proteins that bind and probably mediate the attachment of the 5S RNA into the large ribosomal subunit, where it forms part of the central protuberance. In the 70S ribosome it contacts protein S13 of the 30S subunit (bridge B1b), connecting the 2 subunits; this bridge is implicated in subunit movement. Contacts the P site tRNA; the 5S rRNA and some of its associated proteins might help stabilize positioning of ribosome-bound tRNAs. In Chlamydia abortus (strain DSM 27085 / S26/3) (Chlamydophila abortus), this protein is Large ribosomal subunit protein uL5.